Here is a 259-residue protein sequence, read N- to C-terminus: MVLAGRGMPGTKECLICLTALLLAAAAAAMINGVLDAKLDARMARLHRRVASLERIGAQRATVAAAGMLFAALALSITFLPRLTTALILLAIFSYTPLYTLWFKRRSPWGVVPGGIPGALPVLVGASAVSGTISSAPLILFLVMLLWQPPHFWALALKHQDDYRRAGVPTLPLVRGEAYTKVCIFVFAALLLPASLALWFTGACSARFAIEALCLGFFNLFSCYLYLVKNRRFQRAFQASIFYLLGLLSAVIIDICSRP.

8 helical membrane-spanning segments follow: residues 15–35 (LICL…NGVL), 61–81 (ATVA…TFLP), 83–103 (LTTA…TLWF), 109–129 (WGVV…ASAV), 137–157 (PLIL…ALAL), 182–202 (VCIF…WFTG), 208–228 (FAIE…LYLV), and 236–256 (AFQA…IDIC).

This sequence belongs to the UbiA prenyltransferase family. Protoheme IX farnesyltransferase subfamily.

Its subcellular location is the cell inner membrane. It carries out the reaction heme b + (2E,6E)-farnesyl diphosphate + H2O = Fe(II)-heme o + diphosphate. It functions in the pathway porphyrin-containing compound metabolism; heme O biosynthesis; heme O from protoheme: step 1/1. Converts heme B (protoheme IX) to heme O by substitution of the vinyl group on carbon 2 of heme B porphyrin ring with a hydroxyethyl farnesyl side group. The polypeptide is Protoheme IX farnesyltransferase (Geotalea uraniireducens (strain Rf4) (Geobacter uraniireducens)).